The chain runs to 353 residues: Photosystem II D2 protein (353 aa).

N-acetylthreonine is present on Thr2. Residue Thr2 is modified to Phosphothreonine. A helical membrane pass occupies residues 41 to 61 (CAYFALGGWFTGTTFVTSWYT). Residue His118 participates in chlorophyll a binding. The chain crosses the membrane as a helical span at residues 125-141 (GFMLRQFELARSVQLRP). Positions 130 and 143 each coordinate pheophytin a. The chain crosses the membrane as a helical span at residues 153 to 166 (VFVSVFLIYPLGQS). His198 contacts chlorophyll a. The chain crosses the membrane as a helical span at residues 208–228 (AALLCAIHGATVENTLFEDGD). 2 residues coordinate a plastoquinone: His215 and Phe262. His215 provides a ligand contact to Fe cation. His269 contributes to the Fe cation binding site. The helical transmembrane segment at 279-295 (GLWMSALGVVGLALNLR) threads the bilayer.

Belongs to the reaction center PufL/M/PsbA/D family. In terms of assembly, PSII is composed of 1 copy each of membrane proteins PsbA, PsbB, PsbC, PsbD, PsbE, PsbF, PsbH, PsbI, PsbJ, PsbK, PsbL, PsbM, PsbT, PsbX, PsbY, PsbZ, Psb30/Ycf12, at least 3 peripheral proteins of the oxygen-evolving complex and a large number of cofactors. It forms dimeric complexes. It depends on The D1/D2 heterodimer binds P680, chlorophylls that are the primary electron donor of PSII, and subsequent electron acceptors. It shares a non-heme iron and each subunit binds pheophytin, quinone, additional chlorophylls, carotenoids and lipids. There is also a Cl(-1) ion associated with D1 and D2, which is required for oxygen evolution. The PSII complex binds additional chlorophylls, carotenoids and specific lipids. as a cofactor.

The protein resides in the plastid. Its subcellular location is the chloroplast thylakoid membrane. The enzyme catalyses 2 a plastoquinone + 4 hnu + 2 H2O = 2 a plastoquinol + O2. Functionally, photosystem II (PSII) is a light-driven water:plastoquinone oxidoreductase that uses light energy to abstract electrons from H(2)O, generating O(2) and a proton gradient subsequently used for ATP formation. It consists of a core antenna complex that captures photons, and an electron transfer chain that converts photonic excitation into a charge separation. The D1/D2 (PsbA/PsbD) reaction center heterodimer binds P680, the primary electron donor of PSII as well as several subsequent electron acceptors. D2 is needed for assembly of a stable PSII complex. This chain is Photosystem II D2 protein, found in Amborella trichopoda.